Here is a 206-residue protein sequence, read N- to C-terminus: LexA repressor (206 aa).

Residues arginine 28–lysine 48 constitute a DNA-binding region (H-T-H motif). Active-site for autocatalytic cleavage activity residues include serine 123 and lysine 160.

The protein belongs to the peptidase S24 family. Homodimer.

It catalyses the reaction Hydrolysis of Ala-|-Gly bond in repressor LexA.. Represses a number of genes involved in the response to DNA damage (SOS response), including recA and lexA. In the presence of single-stranded DNA, RecA interacts with LexA causing an autocatalytic cleavage which disrupts the DNA-binding part of LexA, leading to derepression of the SOS regulon and eventually DNA repair. The protein is LexA repressor of Shewanella oneidensis (strain ATCC 700550 / JCM 31522 / CIP 106686 / LMG 19005 / NCIMB 14063 / MR-1).